A 248-amino-acid chain; its full sequence is Glutaredoxin domain-containing cysteine-rich protein 2 (248 aa).

Composition is skewed to basic and acidic residues over residues 1 to 16 and 157 to 172; these read MEDPEKKLNQKSDGKP and LMNKEESYGGRDQHDR. Disordered stretches follow at residues 1-20 and 150-172; these read MEDPEKKLNQKSDGKPRKVR and EEAEEESLMNKEESYGGRDQHDR.

Belongs to the GRXCR2 family. Interacts with TPRN; the interaction restricts TPRN to the stereocilum basal region.

It is found in the cell projection. The protein resides in the stereocilium. In terms of biological role, required for hearing. Plays a role in maintaining cochlear stereocilia bundles that are involved in sound detection. Ensures the restriction of TPRN to the basal region of stereocilia in hair cells. The polypeptide is Glutaredoxin domain-containing cysteine-rich protein 2 (GRXCR2) (Homo sapiens (Human)).